A 46-amino-acid chain; its full sequence is Ligatoxin-B (46 aa).

3 cysteine pairs are disulfide-bonded: C3–C40, C4–C32, and C16–C26.

Belongs to the plant thionin (TC 1.C.44) family.

The protein resides in the secreted. Thionins are small plant proteins which are toxic to animal cells. They seem to exert their toxic effect at the level of the cell membrane. Their precise function is not known. This Phoradendron liga (Argentine mistletoe) protein is Ligatoxin-B.